We begin with the raw amino-acid sequence, 201 residues long: Ribosomal RNA small subunit methyltransferase G (201 aa).

S-adenosyl-L-methionine-binding positions include Gly-71, Phe-76, 120 to 121, and Arg-134; that span reads LE.

Belongs to the methyltransferase superfamily. RNA methyltransferase RsmG family.

The protein resides in the cytoplasm. The catalysed reaction is guanosine(527) in 16S rRNA + S-adenosyl-L-methionine = N(7)-methylguanosine(527) in 16S rRNA + S-adenosyl-L-homocysteine. In terms of biological role, specifically methylates the N7 position of guanine in position 527 of 16S rRNA. The chain is Ribosomal RNA small subunit methyltransferase G from Rhodospirillum rubrum (strain ATCC 11170 / ATH 1.1.1 / DSM 467 / LMG 4362 / NCIMB 8255 / S1).